A 91-amino-acid chain; its full sequence is Molybdopterin synthase sulfur carrier subunit (91 aa).

G91 is modified (1-thioglycine; alternate). G91 bears the Glycyl adenylate; alternate mark.

Belongs to the MoaD family. MOCS2A subfamily. As to quaternary structure, heterotetramer; composed of 2 small (MOCS2A) and 2 large (MOCS2B) subunits. C-terminal thiocarboxylation occurs in 2 steps, it is first acyl-adenylated (-COAMP) via the hesA/moeB/thiF part of MOCS3, then thiocarboxylated (-COSH) via the rhodanese domain of MOCS3.

The protein resides in the cytoplasm. It functions in the pathway cofactor biosynthesis; molybdopterin biosynthesis. In terms of biological role, acts as a sulfur carrier required for molybdopterin biosynthesis. Component of the molybdopterin synthase complex that catalyzes the conversion of precursor Z into molybdopterin by mediating the incorporation of 2 sulfur atoms into precursor Z to generate a dithiolene group. In the complex, serves as sulfur donor by being thiocarboxylated (-COSH) at its C-terminus by MOCS3. After interaction with MOCS2B, the sulfur is then transferred to precursor Z to form molybdopterin. The polypeptide is Molybdopterin synthase sulfur carrier subunit (Anopheles gambiae (African malaria mosquito)).